The chain runs to 292 residues: MTFQGAFTALVTPFKDGEIDQDAYRELIEWQIEQGIDGLVPCGTTGEAATMTHEEQGEVIRICVEQAKGRVPVIAGAGSNNTKEAVNLTKLAKQAGADATLQITPYYNKPTPAGLLAHFKALSEEASMPFILYNVPGRTGLNALPETIAMIANEVPDVVGVKEATANLGQVSDVIEQCPEGFTVLSGDDFTVLPLLALGGHGVISVVSNIVPDLMSGMCAAYRAGDMKKAQELHFKMQPLNRVMFVETNPIPVKTALGMMGKFETSFRLPLVPLMEASKAKLEAQLKASGLI.

Thr45 provides a ligand contact to pyruvate. Tyr133 acts as the Proton donor/acceptor in catalysis. The active-site Schiff-base intermediate with substrate is Lys162. Ile204 contacts pyruvate.

It belongs to the DapA family. Homotetramer; dimer of dimers.

Its subcellular location is the cytoplasm. The enzyme catalyses L-aspartate 4-semialdehyde + pyruvate = (2S,4S)-4-hydroxy-2,3,4,5-tetrahydrodipicolinate + H2O + H(+). Its pathway is amino-acid biosynthesis; L-lysine biosynthesis via DAP pathway; (S)-tetrahydrodipicolinate from L-aspartate: step 3/4. Its function is as follows. Catalyzes the condensation of (S)-aspartate-beta-semialdehyde [(S)-ASA] and pyruvate to 4-hydroxy-tetrahydrodipicolinate (HTPA). The sequence is that of 4-hydroxy-tetrahydrodipicolinate synthase from Maridesulfovibrio salexigens (strain ATCC 14822 / DSM 2638 / NCIMB 8403 / VKM B-1763) (Desulfovibrio salexigens).